The primary structure comprises 570 residues: Urease subunit alpha (570 aa).

A Urease domain is found at 131-570 (GGFDSHIHFI…LPLAQRYFMF (440 aa)). Residues histidine 136, histidine 138, and lysine 219 each coordinate Ni(2+). Lysine 219 bears the N6-carboxylysine mark. Histidine 221 serves as a coordination point for substrate. Ni(2+) contacts are provided by histidine 248 and histidine 274. Histidine 322 serves as the catalytic Proton donor. Aspartate 362 is a binding site for Ni(2+).

It belongs to the metallo-dependent hydrolases superfamily. Urease alpha subunit family. Heterotrimer of UreA (gamma), UreB (beta) and UreC (alpha) subunits. Three heterotrimers associate to form the active enzyme. Ni cation is required as a cofactor. Carboxylation allows a single lysine to coordinate two nickel ions.

The protein resides in the cytoplasm. It catalyses the reaction urea + 2 H2O + H(+) = hydrogencarbonate + 2 NH4(+). Its pathway is nitrogen metabolism; urea degradation; CO(2) and NH(3) from urea (urease route): step 1/1. The protein is Urease subunit alpha of Rhodopseudomonas palustris (strain TIE-1).